We begin with the raw amino-acid sequence, 310 residues long: Porphobilinogen deaminase (310 aa).

Position 242 is an S-(dipyrrolylmethanemethyl)cysteine (Cys-242).

Belongs to the HMBS family. In terms of assembly, monomer. Requires dipyrromethane as cofactor.

It carries out the reaction 4 porphobilinogen + H2O = hydroxymethylbilane + 4 NH4(+). Its pathway is porphyrin-containing compound metabolism; protoporphyrin-IX biosynthesis; coproporphyrinogen-III from 5-aminolevulinate: step 2/4. Functionally, tetrapolymerization of the monopyrrole PBG into the hydroxymethylbilane pre-uroporphyrinogen in several discrete steps. In Psychromonas ingrahamii (strain DSM 17664 / CCUG 51855 / 37), this protein is Porphobilinogen deaminase.